A 289-amino-acid chain; its full sequence is 2-dehydro-3-deoxyphosphooctonate aldolase (289 aa).

The protein belongs to the KdsA family.

The protein resides in the cytoplasm. The enzyme catalyses D-arabinose 5-phosphate + phosphoenolpyruvate + H2O = 3-deoxy-alpha-D-manno-2-octulosonate-8-phosphate + phosphate. The protein operates within carbohydrate biosynthesis; 3-deoxy-D-manno-octulosonate biosynthesis; 3-deoxy-D-manno-octulosonate from D-ribulose 5-phosphate: step 2/3. Its pathway is bacterial outer membrane biogenesis; lipopolysaccharide biosynthesis. In Cupriavidus necator (strain ATCC 17699 / DSM 428 / KCTC 22496 / NCIMB 10442 / H16 / Stanier 337) (Ralstonia eutropha), this protein is 2-dehydro-3-deoxyphosphooctonate aldolase.